The primary structure comprises 104 residues: Large ribosomal subunit protein uL24 (104 aa).

Belongs to the universal ribosomal protein uL24 family. Part of the 50S ribosomal subunit.

Its function is as follows. One of two assembly initiator proteins, it binds directly to the 5'-end of the 23S rRNA, where it nucleates assembly of the 50S subunit. One of the proteins that surrounds the polypeptide exit tunnel on the outside of the subunit. The protein is Large ribosomal subunit protein uL24 of Pseudomonas syringae pv. syringae (strain B728a).